The primary structure comprises 492 residues: Serine/threonine-protein kinase 3 (492 aa).

A Protein kinase domain is found at 26 to 277 (FDVLEKLGEG…ATQLLQHPFI (252 aa)). ATP contacts are provided by residues 32–40 (LGEGSYGSV) and lysine 55. The active-site Proton acceptor is aspartate 145. A Phosphothreonine; by autocatalysis modification is found at threonine 179. Coiled-coil stretches lie at residues 286-328 (LRDL…TMVK) and 443-476 (NLDFEELQMRLTALDPMMEREIEELRQRYTAKRQ). A compositionally biased stretch (basic and acidic residues) spans 297-307 (KAKRQQEQQRE). Residues 297–339 (KAKRQQEQQRELEEDDENSEEEVEVDSHTMVKSGSESAGTMRA) form a disordered region. Residues 308–320 (LEEDDENSEEEVE) are compositionally biased toward acidic residues. Positions 326 to 339 (MVKSGSESAGTMRA) are enriched in polar residues. Residues 438 to 485 (FDFLKNLDFEELQMRLTALDPMMEREIEELRQRYTAKRQPILDAMDAK) enclose the SARAH domain.

This sequence belongs to the protein kinase superfamily. STE Ser/Thr protein kinase family. STE20 subfamily. As to quaternary structure, homodimer; mediated via the coiled-coil region. Mg(2+) is required as a cofactor.

It localises to the cytoplasm. It is found in the nucleus. The enzyme catalyses L-seryl-[protein] + ATP = O-phospho-L-seryl-[protein] + ADP + H(+). The catalysed reaction is L-threonyl-[protein] + ATP = O-phospho-L-threonyl-[protein] + ADP + H(+). Its activity is regulated as follows. Inhibited by the C-terminal non-catalytic region. Activated by caspase-cleavage. Full activation also requires homodimerization and autophosphorylation of Thr-179. In terms of biological role, stress-activated, pro-apoptotic kinase which, following caspase-cleavage, enters the nucleus and induces chromatin condensation followed by internucleosomal DNA fragmentation. Key component of the Hippo signaling pathway which plays a pivotal role in organ size control and tumor suppression by restricting proliferation and promoting apoptosis. The core of this pathway is composed of a kinase cascade wherein stk3/mst2 and stk4/mst1, in complex with its regulatory protein sav1, phosphorylates and activates lats1/2 in complex with its regulatory protein mob1, which in turn phosphorylates and inactivates yap1 oncoprotein and wwtr1/taz. Phosphorylation of yap1 by lats2 inhibits its translocation into the nucleus to regulate cellular genes important for cell proliferation, cell death, and cell migration. The chain is Serine/threonine-protein kinase 3 (stk3) from Danio rerio (Zebrafish).